A 259-amino-acid chain; its full sequence is Phosphate import ATP-binding protein PstB (259 aa).

Positions 13–254 (IQVRDLNFYY…PAQRQTEDYI (242 aa)) constitute an ABC transporter domain. 45-52 (GPSGCGKS) is an ATP binding site.

Belongs to the ABC transporter superfamily. Phosphate importer (TC 3.A.1.7) family. The complex is composed of two ATP-binding proteins (PstB), two transmembrane proteins (PstC and PstA) and a solute-binding protein (PstS).

It is found in the cell inner membrane. It carries out the reaction phosphate(out) + ATP + H2O = ADP + 2 phosphate(in) + H(+). Part of the ABC transporter complex PstSACB involved in phosphate import. Responsible for energy coupling to the transport system. The protein is Phosphate import ATP-binding protein PstB of Edwardsiella tarda.